A 152-amino-acid chain; its full sequence is Ubiquitin-conjugating enzyme E2 N (152 aa).

The 147-residue stretch at 3–149 folds into the UBC core domain; that stretch reads GLPRRIIKET…ARAWTRLYAM (147 aa). K82 is modified (N6-acetyllysine). C87 (glycyl thioester intermediate) is an active-site residue. K92 participates in a covalent cross-link: Glycyl lysine isopeptide (Lys-Gly) (interchain with G-Cter in ISG15).

It belongs to the ubiquitin-conjugating enzyme family. Heterodimer with UBE2V2. Interacts (UBE2V2-UBE2N heterodimer) with the E3 ligase STUB1 (via the U-box domain); the complex has a specific 'Lys-63'-linked polyubiquitination activity. Interacts with RNF8 and RNF168. Interacts with RNF11. Interacts with the E3 ligases, HLTF and SHPRH; the interactions promote the 'Lys-63'-linked polyubiquitination of PCNA upon genotoxic stress and lead to DNA repair. Interacts with ARIH2 (via RING-type 2). Interacts with OTUB1; leading to inhibit E2-conjugating activity. Interacts with GPS2; leading to inhibit E2-conjugating activity. Interacts with RIGI and RNF135; involved in RIGI ubiquitination and activation. Post-translationally, conjugation to ISG15 impairs formation of the thioester bond with ubiquitin but not interaction with UBE2V2.

The enzyme catalyses S-ubiquitinyl-[E1 ubiquitin-activating enzyme]-L-cysteine + [E2 ubiquitin-conjugating enzyme]-L-cysteine = [E1 ubiquitin-activating enzyme]-L-cysteine + S-ubiquitinyl-[E2 ubiquitin-conjugating enzyme]-L-cysteine.. Its pathway is protein modification; protein ubiquitination. With respect to regulation, activity is inhibited by binding to OTUB1, which prevents 'Lys-63'-linked polyubiquitination. Activity is inhibited by GPS2, leading to prevent 'Lys-63'-linked polyubiquitination. Functionally, the UBE2V1-UBE2N and UBE2V2-UBE2N heterodimers catalyze the synthesis of non-canonical 'Lys-63'-linked polyubiquitin chains. This type of polyubiquitination does not lead to protein degradation by the proteasome. Mediates transcriptional activation of target genes. Plays a role in the control of progress through the cell cycle and differentiation. Plays a role in the error-free DNA repair pathway and contributes to the survival of cells after DNA damage. Acts together with the E3 ligases, HLTF and SHPRH, in the 'Lys-63'-linked poly-ubiquitination of PCNA upon genotoxic stress, which is required for DNA repair. Appears to act together with E3 ligase RNF5 in the 'Lys-63'-linked polyubiquitination of JKAMP thereby regulating JKAMP function by decreasing its association with components of the proteasome and ERAD. Promotes TRIM5 capsid-specific restriction activity and the UBE2V1-UBE2N heterodimer acts in concert with TRIM5 to generate 'Lys-63'-linked polyubiquitin chains which activate the MAP3K7/TAK1 complex which in turn results in the induction and expression of NF-kappa-B and MAPK-responsive inflammatory genes. Together with RNF135 and UB2V1, catalyzes the viral RNA-dependent 'Lys-63'-linked polyubiquitination of RIGI to activate the downstream signaling pathway that leads to interferon beta production. UBE2V1-UBE2N together with TRAF3IP2 E3 ubiquitin ligase mediate 'Lys-63'-linked polyubiquitination of TRAF6, a component of IL17A-mediated signaling pathway. The protein is Ubiquitin-conjugating enzyme E2 N (UBE2N) of Bos taurus (Bovine).